The primary structure comprises 363 residues: Protein-arginine kinase (363 aa).

The Phosphagen kinase C-terminal domain occupies 24–255 (IVLSSRIRLA…EQLIAQERAA (232 aa)). ATP is bound by residues 27-31 (SSRIR), histidine 92, arginine 126, 177-181 (RASVM), and 208-213 (RGTYGE). The RDXXRA motif of the pArg binding pocket involved in allosteric regulation motif lies at 338–343 (RDVRRA).

This sequence belongs to the ATP:guanido phosphotransferase family. As to quaternary structure, homodimer. Dimerization is important for full catalytic activity.

The enzyme catalyses L-arginyl-[protein] + ATP = N(omega)-phospho-L-arginyl-[protein] + ADP + H(+). Appears to be allosterically activated by the binding of pArg-containing polypeptides to the pArg-binding pocket localized in the C-terminal domain of McsB. In terms of biological role, catalyzes the specific phosphorylation of arginine residues in a large number of proteins. Is part of the bacterial stress response system, where it is involved in regulating the global heat shock repressor CtsR; phosphorylates arginine residues in the winged helix-turn-helix domain of CtsR, thereby preventing its binding to DNA and consequently inducing the expression of repressed genes. Protein arginine phosphorylation has a physiologically important role and is involved in the regulation of many critical cellular processes, such as protein homeostasis, motility, competence, and stringent and stress responses, by regulating gene expression and protein activity. Acts exclusively on Arg residues, since it cannot phosphorylate Tyr, Ser, Thr, His, Asp and Lys. Has no free arginine kinase activity. The chain is Protein-arginine kinase from Geobacillus stearothermophilus (Bacillus stearothermophilus).